Reading from the N-terminus, the 348-residue chain is GTPase Obg (348 aa).

The Obg domain maps to 1–160 (MHFLDQAKIF…MWVWLRLKLL (160 aa)). The segment at 120 to 145 (RGGDGGRGNASYKTSTNRAPRQHGPG) is disordered. Residues 161–328 (ADAGLVGLPN…VLDKLLEAIG (168 aa)) enclose the OBG-type G domain. GTP is bound by residues 167–174 (GLPNAGKS), 192–196 (FTTLR), 213–216 (DIPG), 280–283 (NKID), and 309–311 (SGA). Mg(2+)-binding residues include Ser174 and Thr194. The disordered stretch occupies residues 326 to 348 (AIGQPEPGPDADEEEKGGDWSPI).

Belongs to the TRAFAC class OBG-HflX-like GTPase superfamily. OBG GTPase family. As to quaternary structure, monomer. The cofactor is Mg(2+).

It localises to the cytoplasm. In terms of biological role, an essential GTPase which binds GTP, GDP and possibly (p)ppGpp with moderate affinity, with high nucleotide exchange rates and a fairly low GTP hydrolysis rate. Plays a role in control of the cell cycle, stress response, ribosome biogenesis and in those bacteria that undergo differentiation, in morphogenesis control. The chain is GTPase Obg from Sphingopyxis alaskensis (strain DSM 13593 / LMG 18877 / RB2256) (Sphingomonas alaskensis).